Reading from the N-terminus, the 312-residue chain is Homoserine kinase (312 aa).

91 to 101 (PVASGLGSSAC) is an ATP binding site.

It belongs to the GHMP kinase family. Homoserine kinase subfamily.

Its subcellular location is the cytoplasm. The catalysed reaction is L-homoserine + ATP = O-phospho-L-homoserine + ADP + H(+). The protein operates within amino-acid biosynthesis; L-threonine biosynthesis; L-threonine from L-aspartate: step 4/5. In terms of biological role, catalyzes the ATP-dependent phosphorylation of L-homoserine to L-homoserine phosphate. In Blochmanniella pennsylvanica (strain BPEN), this protein is Homoserine kinase.